The primary structure comprises 253 residues: MSTTNKIYFIAGGNRGIGLSLVKELSNREGTVVFASARKPEAATELQEWSKSHSNVHIIKLDISSLESANEAAQEVAKAVGKVDVLWVNSGIFHSFNTVLNTPDDVWNSHYKTNVLGPIHVYQAFYPLVKKGESKIIVFTSSLVGSMGAFFPFNQSGYGQSKAALNFTMKEISFELQDEGFIVISIHPGMVRTDSAQEAVNQHAEAKPEILDIFAKQALAPDQSASDMLKVVDNLKPENNGFFFNYDGTTIPY.

Residues Ile-17, Ser-36, Asp-62, Asn-89, Tyr-158, Lys-162, Val-191, and Thr-193 each contribute to the NADP(+) site. Catalysis depends on Tyr-158, which acts as the Proton donor. Catalysis depends on Lys-162, which acts as the Lowers pKa of active site Tyr.

Belongs to the short-chain dehydrogenases/reductases (SDR) family.

It localises to the cytoplasm. Its subcellular location is the nucleus. This is an uncharacterized protein from Schizosaccharomyces pombe (strain 972 / ATCC 24843) (Fission yeast).